A 345-amino-acid polypeptide reads, in one-letter code: UPF0324 membrane protein CTC_01844 (345 aa).

The next 10 membrane-spanning stretches (helical) occupy residues 7 to 24 (YSVGILFTAVLAVISGFI), 28 to 50 (IPYRLIGAGVFALLIGMFLNPIV), 70 to 87 (LAIILMGITLSFSQVLEV), 91 to 113 (SLIVMVFTLITAFGGGYLLGKLF), 120 to 142 (SGLISAGTGICGGSAIAAISPVI), 152 to 174 (AISATFIFDVIMVILFPIAGKYF), 181 to 203 (YGLWAGTAVNDTSSVVAAGYAFS), 209 to 231 (FSVIVKLTRTLSIVPVVLIFSYI), 261 to 283 (IFPWFILLFLVMVAIKSTGIIPN), and 316 to 338 (SGFAPAVHGFIISLLVVVVSFLV).

Belongs to the UPF0324 family.

The protein localises to the cell membrane. The protein is UPF0324 membrane protein CTC_01844 of Clostridium tetani (strain Massachusetts / E88).